The chain runs to 100 residues: Transcription elongation factor A protein-like 7 (100 aa).

Positions 1–32 (MQKPCKENEGKPKCSVPKREEKRPYGEFERQQ) are enriched in basic and acidic residues. Residues 1–34 (MQKPCKENEGKPKCSVPKREEKRPYGEFERQQTE) are disordered. The stretch at 60-88 (EEMTREGDEMERCLEEIRGLRKKFRALHS) forms a coiled coil.

It belongs to the TFS-II family. TFA subfamily. As to expression, highly expressed in normal and fetal brain tissues, and weakly expressed in uterus and ovary. Down-regulated in epithelial ovarian, cervical, prostate, breast, brain and lung cancer cell lines and in brain and ovarian tumors.

Its subcellular location is the nucleus. Its function is as follows. Plays a role in the negative regulation of NF-kappa-B signaling at the basal level by modulating transcriptional activity of NF-kappa-B on its target gene promoters. Associates with cyclin D1 promoter containing Myc E-box sequence and transcriptionally represses cyclin D1 expression. Regulates telomerase reverse transcriptase expression and telomerase activity in both ALT (alternative lengthening of telomeres)and telomerase-positive cell lines. The chain is Transcription elongation factor A protein-like 7 (TCEAL7) from Homo sapiens (Human).